Consider the following 501-residue polypeptide: MPRRPSGGGGGAGPAAAAVRKVPLRKLLRAASVACGVQFGWALQLSLLTPYVQELGIPHAFASLVWLCGPLSGLLVQPLVGHLSDRIAPAASPLGRRRPFIAAGAASIAAAVLTVGFSADLGRIFGDSITPGSTRLGAIIVYLVGFWLLDVGNNATQGPCRAFLADLTENDPRRTRIANAYFSLFMALGNILGYATGAYSGWYKIFPFTVTPSCSISCANLKSAFLLDIIILVVTTCITVASVQEPQSLGSDEADHPSTEQEAFLWELFGSFRYFTLPVWMVLIVTALTWIGWFPFILFDTDWMGREIYRGSPDDPSITQSYHDGVRMGSFGLMLNSVLLGFTSIVLEKLCRKWGAGLVWGVSNILMALCFVAMLVITYVAKNMDYPPSGVPPTGIVIASLVVFTILGAPLAITYSIPYAMAASRVENLGLGQGLAMGILNLAIVIPQVIVSLGSGPWDQLFGGGNAPAFAVAAAASFIGGLVAILGLPRARIASRRRGHR.

The Cytoplasmic portion of the chain corresponds to 1 to 31; that stretch reads MPRRPSGGGGGAGPAAAAVRKVPLRKLLRAA. The chain crosses the membrane as a helical span at residues 32–52; it reads SVACGVQFGWALQLSLLTPYV. Residues 53–55 lie on the Extracellular side of the membrane; that stretch reads QEL. The helical transmembrane segment at 56 to 76 threads the bilayer; it reads GIPHAFASLVWLCGPLSGLLV. At 77–98 the chain is on the cytoplasmic side; the sequence is QPLVGHLSDRIAPAASPLGRRR. Residues 99 to 119 form a helical membrane-spanning segment; that stretch reads PFIAAGAASIAAAVLTVGFSA. The Extracellular segment spans residues 120 to 135; it reads DLGRIFGDSITPGSTR. Residues 136–156 traverse the membrane as a helical segment; the sequence is LGAIIVYLVGFWLLDVGNNAT. At 157-176 the chain is on the cytoplasmic side; sequence QGPCRAFLADLTENDPRRTR. The helical transmembrane segment at 177–197 threads the bilayer; sequence IANAYFSLFMALGNILGYATG. Topologically, residues 198 to 222 are extracellular; that stretch reads AYSGWYKIFPFTVTPSCSISCANLK. A helical transmembrane segment spans residues 223 to 243; sequence SAFLLDIIILVVTTCITVASV. Topologically, residues 244 to 278 are cytoplasmic; that stretch reads QEPQSLGSDEADHPSTEQEAFLWELFGSFRYFTLP. Residues 279–299 form a helical membrane-spanning segment; sequence VWMVLIVTALTWIGWFPFILF. Residues 300–327 lie on the Extracellular side of the membrane; it reads DTDWMGREIYRGSPDDPSITQSYHDGVR. Residues 328–348 form a helical membrane-spanning segment; sequence MGSFGLMLNSVLLGFTSIVLE. Topologically, residues 349-356 are cytoplasmic; it reads KLCRKWGA. A helical transmembrane segment spans residues 357–377; sequence GLVWGVSNILMALCFVAMLVI. The Extracellular portion of the chain corresponds to 378 to 394; the sequence is TYVAKNMDYPPSGVPPT. A helical transmembrane segment spans residues 395-415; the sequence is GIVIASLVVFTILGAPLAITY. At 416-433 the chain is on the cytoplasmic side; sequence SIPYAMAASRVENLGLGQ. The chain crosses the membrane as a helical span at residues 434 to 454; that stretch reads GLAMGILNLAIVIPQVIVSLG. Topologically, residues 455-467 are extracellular; that stretch reads SGPWDQLFGGGNA. Residues 468–488 form a helical membrane-spanning segment; the sequence is PAFAVAAAASFIGGLVAILGL. The Cytoplasmic portion of the chain corresponds to 489 to 501; sequence PRARIASRRRGHR.

Belongs to the glycoside-pentoside-hexuronide (GPH) cation symporter transporter (TC 2.A.2.4) family. As to quaternary structure, homodimer. In terms of tissue distribution, expressed in source leaf blades.

It localises to the cell membrane. Its pathway is glycan biosynthesis; sucrose metabolism. Functionally, responsible for the transport of sucrose into the cell, with the concomitant uptake of protons (symport system). May also transport other glucosides. The protein is Sucrose transport protein SUT2 (SUT2) of Oryza sativa subsp. indica (Rice).